The primary structure comprises 363 residues: GDP-fucose transporter (363 aa).

Transmembrane regions (helical) follow at residues 30–47 (VITAVSAYWVFSIGLVFL), 62–79 (FITWYQCLVTVFLCLFLS), 126–148 (VSFYYVGRSLTTVFNVVCTYLIL), 152–171 (TSGQAIGCCALIIFGFLLGV), 180–202 (LSYTGVIFGVLASLSVALNAIYT), 222–244 (LNALVLFLPLMLFNGEFGAVFYF), 251–273 (TFWILMTLGGVFGFMMGYVTGWQ), and 307–326 (LLWWTSNFVVLFGSGMYTYV). The disordered stretch occupies residues 334–363 (KNSGASPASEAKSDKVKLLGRDGNAAEESV). Basic and acidic residues predominate over residues 344 to 353 (AKSDKVKLLG).

The protein belongs to the TPT transporter family. SLC35C subfamily.

The protein resides in the golgi apparatus membrane. Its function is as follows. Involved in GDP-fucose import from the cytoplasm into the Golgi lumen. This is GDP-fucose transporter from Caenorhabditis elegans.